The chain runs to 447 residues: Elongation factor 1-alpha (447 aa).

The tr-type G domain occupies 5-230 (KVHINIVVIG…DNINEPKRPS (226 aa)). Residues 14-21 (GHVDSGKS) form a G1 region. Residue 14–21 (GHVDSGKS) participates in GTP binding. Lys-55 is subject to N6,N6-dimethyllysine. The interval 70–74 (GITID) is G2. An N6,N6,N6-trimethyllysine modification is found at Lys-79. Residues 91–94 (DAPG) are G3. Residues 91 to 95 (DAPGH) and 153 to 156 (NKMD) contribute to the GTP site. The tract at residues 153-156 (NKMD) is G4. Residue Lys-187 is modified to N6,N6,N6-trimethyllysine. The G5 stretch occupies residues 194-196 (SGF). Lys-261 is modified (N6-methyllysine). Glu-289 carries the post-translational modification 5-glutamyl glycerylphosphorylethanolamine. Position 306 is an N6,N6,N6-trimethyllysine (Lys-306). Position 362 is a 5-glutamyl glycerylphosphorylethanolamine (Glu-362). Lys-396 is subject to N6,N6,N6-trimethyllysine.

It belongs to the TRAFAC class translation factor GTPase superfamily. Classic translation factor GTPase family. EF-Tu/EF-1A subfamily.

Its subcellular location is the cytoplasm. Its function is as follows. This protein promotes the GTP-dependent binding of aminoacyl-tRNA to the A-site of ribosomes during protein biosynthesis. The sequence is that of Elongation factor 1-alpha from Vicia faba (Broad bean).